Reading from the N-terminus, the 225-residue chain is Germin-like protein 8-6 (225 aa).

An N-terminal signal peptide occupies residues 1–23 (MASPSSLCLLTALLALVSWQTIA). Cysteine 33 and cysteine 48 form a disulfide bridge. Residues 63–213 (AMLDTPRKTN…AFQVEKGTID (151 aa)) enclose the Cupin type-1 domain. Asparagine 77 is a glycosylation site (N-linked (GlcNAc...) asparagine). 3 residues coordinate Mn(2+): histidine 110, histidine 112, and glutamate 117. Residue asparagine 136 is glycosylated (N-linked (GlcNAc...) asparagine). Residue histidine 158 participates in Mn(2+) binding.

The protein belongs to the germin family. In terms of assembly, oligomer (believed to be a pentamer but probably hexamer).

It is found in the secreted. The protein localises to the extracellular space. Its subcellular location is the apoplast. In terms of biological role, plays a role in broad-spectrum disease resistance. Probably has no oxalate oxidase activity even if the active site is conserved. The sequence is that of Germin-like protein 8-6 from Oryza sativa subsp. japonica (Rice).